The following is a 334-amino-acid chain: Cytoplasmic envelopment protein 2 (334 aa).

Belongs to the herpesviridae cytoplasmic envelopment protein 2 family. Interacts with cytoplasmic envelopment protein 3 and with the capsid.

The protein resides in the virion tegument. It localises to the host cytoplasm. The protein localises to the host nucleus. Functionally, plays a critical role in cytoplasmic virus egress. Participates in the final step of tegumentation and envelope acquisition within the host cytoplasm by directly interacting with the capsid. Upon virion binding to target cell, a signaling cascade is triggered to disrupt the interaction with the capsid, thereby preparing capsid uncoating. This chain is Cytoplasmic envelopment protein 2 (ORF33), found in Homo sapiens (Human).